Reading from the N-terminus, the 326-residue chain is Putative HTH-type transcriptional regulatory protein MMP0678 (326 aa).

The HTH cro/C1-type domain maps to 128-183; the sequence is LRETREKLKISVGELAEVSRVSRKTIYKYEQNEANPSAEVAIKIEEYLDVPLIKGI. Residues 139-158 constitute a DNA-binding region (H-T-H motif); sequence VGELAEVSRVSRKTIYKYEQ.

The protein is Putative HTH-type transcriptional regulatory protein MMP0678 of Methanococcus maripaludis (strain DSM 14266 / JCM 13030 / NBRC 101832 / S2 / LL).